Consider the following 1333-residue polypeptide: snRNA-activating protein complex subunit 4 (1333 aa).

The disordered stretch occupies residues 29–84; the sequence is HFEVSESSLSSDSEADSLPDEDLETAGAPILEEEGSSESSNDEEDPKDKALPEDPE. Acidic residues-rich tracts occupy residues 41 to 52 and 59 to 73; these read SEADSLPDEDLE and LEEE…DEED. Ser68 bears the Phosphoserine mark. Residues 84–133 are SNAPC5-binding; it reads ETCLQLNMVYQEVIREKLAEVSQLLAQNQEQQEEILFDLSGTKCPKVKDG. In terms of domain architecture, Myb-like 1 spans 250 to 288; sequence EEALLGNRLDSHDWEKISNINFEGARSAEEIRKFWQSSE. The HTH myb-type 1 domain maps to 289–343; it reads HPSISKQEWSTEEVERLKAIAATHGHLEWHLVAEELGTSRSAFQCLQKFQQYNKT. The segment at residues 317–341 is a DNA-binding region (H-T-H motif); the sequence is WHLVAEELGTSRSAFQCLQKFQQYN. A Myb-like 2 domain is found at 344-395; it reads LKRKEWTEEEDHMLTQLVQEMRVGNHIPYRKIVYFMEGRDSMQLIYRWTKSL. HTH myb-type domains lie at 396–451 and 452–503; these read DPSL…HFSL and KKGR…RKKQ. DNA-binding regions (H-T-H motif) lie at residues 424–447 and 476–499; these read WFKI…IRRL and WARI…KILA. Residues 503–515 show a composition bias toward basic residues; it reads QHLQRKRGQRPRH. Disordered regions lie at residues 503 to 558, 662 to 702, 811 to 842, and 1079 to 1117; these read QHLQ…LEKS, LMKE…QNKQ, NAKN…LGSC, and LPSP…PEKA. Low complexity predominate over residues 516–546; sequence SSQWSSSGSSSSSSEDYGSSSGSDGSSGSEN. Composition is skewed to polar residues over residues 672-686 and 811-826; these read LPSS…NNTA and NAKN…TGEQ. The segment at 1131–1247 is SNAPC2-binding; sequence AIVTWLKGCQ…NSIPTTLSPD (117 aa). A phosphoserine mark is found at Ser1252, Ser1254, Ser1301, and Ser1309. A disordered region spans residues 1282 to 1333; sequence PAAPDPVQSHLVSPGQRAPSPGEVSAPSPLDASDGLDDLNVLRTRRARHSRR. A compositionally biased stretch (basic residues) spans 1324–1333; the sequence is RTRRARHSRR.

In terms of assembly, part of the SNAPc composed of 5 subunits: SNAPC1, SNAPC2, SNAPC3, SNAPC4 and SNAPC5. SNAPC4 interacts with SNAPC1, SNAPC2, SNAPC5, BRF2 and TBP.

The protein resides in the nucleus. In terms of biological role, part of the SNAPc complex required for the transcription of both RNA polymerase II and III small-nuclear RNA genes. Binds to the proximal sequence element (PSE), a non-TATA-box basal promoter element common to these 2 types of genes. Recruits TBP and BRF2 to the U6 snRNA TATA box. The sequence is that of snRNA-activating protein complex subunit 4 from Mus musculus (Mouse).